A 252-amino-acid chain; its full sequence is 3-deoxy-manno-octulosonate cytidylyltransferase (252 aa).

Belongs to the KdsB family.

It is found in the cytoplasm. The enzyme catalyses 3-deoxy-alpha-D-manno-oct-2-ulosonate + CTP = CMP-3-deoxy-beta-D-manno-octulosonate + diphosphate. Its pathway is nucleotide-sugar biosynthesis; CMP-3-deoxy-D-manno-octulosonate biosynthesis; CMP-3-deoxy-D-manno-octulosonate from 3-deoxy-D-manno-octulosonate and CTP: step 1/1. It functions in the pathway bacterial outer membrane biogenesis; lipopolysaccharide biosynthesis. In terms of biological role, activates KDO (a required 8-carbon sugar) for incorporation into bacterial lipopolysaccharide in Gram-negative bacteria. The chain is 3-deoxy-manno-octulosonate cytidylyltransferase from Xylella fastidiosa (strain Temecula1 / ATCC 700964).